A 199-amino-acid chain; its full sequence is Charged multivesicular body protein 1b (199 aa).

Positions 26–48 (DKEEKAEKAKIKKAIQKGNMEVA) form a coiled coil. Residues 132–156 (MEDTMSSTTTLTTPQNQVDMLLQEM) form an interaction with IST1 region. Residues 167 to 199 (ELPQGQTGSVGTSVASAEQDELSQRLARLRDQV) form a disordered region. Polar residues predominate over residues 170–182 (QGQTGSVGTSVAS). Residues 174–199 (GSVGTSVASAEQDELSQRLARLRDQV) form an interaction with SPAST region. Positions 178-199 (TSVASAEQDELSQRLARLRDQV) form a coiled coil. The segment at 180 to 196 (VASAEQDELSQRLARLR) is interaction with VPS4A, MITD1 and STAMBP. The interaction with VTA1 stretch occupies residues 180–199 (VASAEQDELSQRLARLRDQV). Residues 183–199 (AEQDELSQRLARLRDQV) are interaction with VPS4B. An MIT-interacting motif motif is present at residues 186-196 (DELSQRLARLR).

It belongs to the SNF7 family. In terms of assembly, probable peripherally associated component of the endosomal sorting required for transport complex III (ESCRT-III). ESCRT-III components are thought to multimerize to form a flat lattice on the perimeter membrane of the endosome. Several assembly forms of ESCRT-III may exist that interact and act sequentially. Interacts with CHMP1A. Interacts with VTA1; the interaction probably involves the open conformation of CHMP1B. Interacts with CHMP2A. Interacts with VPS4A; the interaction is direct. Interacts with VPS4B; the interaction is direct. Interacts with SPAST (via MIT domain); the interaction is direct. Interacts with IST1. Interacts with MITD1. Interacts with STAMBP. As to expression, widely expressed. Expressed in pancreas, kidney, skeletal muscle, liver, lung, placenta and brain.

Its subcellular location is the cytoplasm. The protein localises to the cytosol. It is found in the endosome. The protein resides in the late endosome membrane. Functionally, probable peripherally associated component of the endosomal sorting required for transport complex III (ESCRT-III) which is involved in multivesicular bodies (MVBs) formation and sorting of endosomal cargo proteins into MVBs. MVBs contain intraluminal vesicles (ILVs) that are generated by invagination and scission from the limiting membrane of the endosome and mostly are delivered to lysosomes enabling degradation of membrane proteins, such as stimulated growth factor receptors, lysosomal enzymes and lipids. The MVB pathway appears to require the sequential function of ESCRT-O, -I,-II and -III complexes. ESCRT-III proteins mostly dissociate from the invaginating membrane before the ILV is released. The ESCRT machinery also functions in topologically equivalent membrane fission events, such as the terminal stages of cytokinesis and the budding of enveloped viruses (HIV-1 and other lentiviruses). ESCRT-III proteins are believed to mediate the necessary vesicle extrusion and/or membrane fission activities, possibly in conjunction with the AAA ATPase VPS4. Involved in cytokinesis. Involved in recruiting VPS4A and/or VPS4B and SPAST to the midbody of dividing cells. Involved in HIV-1 p6- and p9-dependent virus release. The sequence is that of Charged multivesicular body protein 1b (CHMP1B) from Homo sapiens (Human).